We begin with the raw amino-acid sequence, 67 residues long: ORF2p protein (67 aa).

The segment at 13–18 (WIGHPV) is important for viral replication in intestinal cells. At 22 to 38 (AIIYPFVGFIPLSLKEV) the chain is embedded in the membrane.

It localises to the host cytoplasmic vesicle membrane. Its function is as follows. Facilitates virus release from intestinal cells in vitro, possibly through the host autophagic pathway. In Homo sapiens (Human), this protein is ORF2p protein.